The chain runs to 629 residues: UvrABC system protein C (629 aa).

In terms of domain architecture, GIY-YIG spans 26-105; the sequence is TSPGIYQFKN…IKELKPRYNV (80 aa). The UVR domain occupies 219 to 254; that stretch reads SALIRSLTENMHLAATELRFEQAAEIKAQIESLKRY.

It belongs to the UvrC family. In terms of assembly, interacts with UvrB in an incision complex.

The protein resides in the cytoplasm. Its function is as follows. The UvrABC repair system catalyzes the recognition and processing of DNA lesions. UvrC both incises the 5' and 3' sides of the lesion. The N-terminal half is responsible for the 3' incision and the C-terminal half is responsible for the 5' incision. This is UvrABC system protein C from Chlorobium chlorochromatii (strain CaD3).